The primary structure comprises 1201 residues: HEAT repeat-containing protein 6 (1201 aa).

Residues 1–25 are disordered; the sequence is MAGKVTFLGSNSSFSPDGKTQGFKS. An HEAT 1 repeat occupies 182 to 221; it reads PDLLGPSGVLVKYGDPKQPDIELRRSAVHCIANLCLSVPS. The disordered stretch occupies residues 321–390; the sequence is AVKPEPAQDT…SQSSMLTSPS (70 aa). Residues 341-352 are compositionally biased toward basic residues; sequence QKKRKSRGKGKK. Over residues 375 to 390 the composition is skewed to polar residues; the sequence is SGWSHGSQSSMLTSPS. 3 HEAT repeats span residues 460-498, 523-560, and 566-603; these read GIGGPPPLTLLTIALKDPLPKVRAGSLQVLSALLEGSRQ, SIRELHRGLLLALIAESSCQTLTQVLKCLAHLVSNVPY, and GLLSPLWKQIRPYVRHRDVNVRVSSLTLFGALVSTQAP. Positions 618-633 are enriched in polar residues; that stretch reads SSLGSGISTPQESPLS. The interval 618-653 is disordered; sequence SSLGSGISTPQESPLSWRQPARRDEEASSPAAAEGP.

This is HEAT repeat-containing protein 6 (heatr6) from Danio rerio (Zebrafish).